Consider the following 397-residue polypeptide: Argininosuccinate synthase (397 aa).

8-16 (AYSGGLDTS) contacts ATP. Residues Tyr-86 and Ser-91 each coordinate L-citrulline. Residue Gly-116 participates in ATP binding. Positions 118, 122, and 123 each coordinate L-aspartate. Asn-122 is an L-citrulline binding site. The L-citrulline site is built by Arg-126, Ser-175, Ser-184, Glu-260, and Tyr-272.

Belongs to the argininosuccinate synthase family. Type 1 subfamily. Homotetramer.

The protein localises to the cytoplasm. The enzyme catalyses L-citrulline + L-aspartate + ATP = 2-(N(omega)-L-arginino)succinate + AMP + diphosphate + H(+). It participates in amino-acid biosynthesis; L-arginine biosynthesis; L-arginine from L-ornithine and carbamoyl phosphate: step 2/3. The protein is Argininosuccinate synthase of Clostridium botulinum (strain Langeland / NCTC 10281 / Type F).